Consider the following 200-residue polypeptide: Ependymin-related protein 1 (200 aa).

The first 17 residues, methionine 1–glycine 17, serve as a signal peptide directing secretion. N-linked (GlcNAc...) asparagine glycans are attached at residues asparagine 36, asparagine 124, and asparagine 136.

Belongs to the ependymin family. Component of the acid-soluble and acid-insoluble organic matrix of prismatic shell layers (at protein level). Expressed discontinuously in the anterior zone of the outer fold of the mantle where its expression correlates with shell pigmentation.

The protein resides in the secreted. The sequence is that of Ependymin-related protein 1 from Haliotis asinina (Donkey's ear abalone).